The following is a 163-amino-acid chain: Staphylokinase (163 aa).

An N-terminal signal peptide occupies residues 1-27; the sequence is MLKRSLLFLTVLLLLFSFSSITNEVSA.

It belongs to the staphylokinase family.

Its subcellular location is the secreted. In terms of biological role, potent plasminogen activator that converts plasminogen into plasmin. It forms a 1:1 complex with plasmin, which in turn activates other plasminogen molecules. The protein is Staphylokinase (sak) of Staphylococcus phage phi13 (Bacteriophage phi-13).